The following is a 77-amino-acid chain: UPF0291 protein YnzC (77 aa).

The segment at Asp56–His77 is disordered. A compositionally biased stretch (basic and acidic residues) spans Thr63 to His77.

Belongs to the UPF0291 family.

Its subcellular location is the cytoplasm. This Bacillus subtilis (strain 168) protein is UPF0291 protein YnzC (ynzC).